Reading from the N-terminus, the 116-residue chain is Aspartate 1-decarboxylase (116 aa).

The active-site Schiff-base intermediate with substrate; via pyruvic acid is the serine 25. Serine 25 bears the Pyruvic acid (Ser) mark. Threonine 57 lines the substrate pocket. Catalysis depends on tyrosine 58, which acts as the Proton donor. 73–75 contacts substrate; sequence GAA.

It belongs to the PanD family. In terms of assembly, heterooctamer of four alpha and four beta subunits. It depends on pyruvate as a cofactor. In terms of processing, is synthesized initially as an inactive proenzyme, which is activated by self-cleavage at a specific serine bond to produce a beta-subunit with a hydroxyl group at its C-terminus and an alpha-subunit with a pyruvoyl group at its N-terminus.

It is found in the cytoplasm. The enzyme catalyses L-aspartate + H(+) = beta-alanine + CO2. It functions in the pathway cofactor biosynthesis; (R)-pantothenate biosynthesis; beta-alanine from L-aspartate: step 1/1. Catalyzes the pyruvoyl-dependent decarboxylation of aspartate to produce beta-alanine. This is Aspartate 1-decarboxylase from Fervidobacterium nodosum (strain ATCC 35602 / DSM 5306 / Rt17-B1).